Consider the following 788-residue polypeptide: MKDKSIKVLEFNKIQEILKNYTCTKAGKDIIEDLKPYDSVYEVREHLEETKEAFKLLITKGAPPFEGVYDIRNGIYLAEKGSALLPGQLLKIAAVLRCARRFREYINHKEQEESYRVLENICEGIFSLPKIEEEIFNAIEGEDEIADRASSTLYNIRRSLKEKNYSVRDKINSLVRSYSSYLQENIYTVRRDRYVLPVKAEHKGAVPGLVHDQSSTGATLFIEPMSLVNLNNEIKELMLKEKAEIERILTVLSAKINANITGVKTDANIVWELDFIFAKAKFASEYNCTCPTINDEGIVDIIEGRHPLIDRREVVPISVKLGEEFTSLMITGPNTGGKTVTLKTVGLIHLMAMSGLMIPARENSVISYFNNVFADIGDEQSIEQSLSTFSSHMKNIVEIMDKADENSLVLFDELGAGTDPTEGAALAISILENLRKRGAKIIATTHYSELKAYALRKEGVENASVEFDVETLRPTYRLLIGIPGKSNAFEISKRLGLPDYIIDFARENISNENIRFEELIQNLQEKSIKAQEDARLAENLKLERDKEKKKYEEKLEGLQKVRDNALIDARREAKNIIKEAKEEADKILKDIRQLERMGYSSDARRKLEEERKKLKDKLDSIEEKEIKTVHKGEALKNVKEGDEVLLASINQKVIVLSKPDNKGDVLVQAGIMKITANIKDLRAAKGSNFNSNSSKTKKSKKLNLNLRKVESSVDLRGMDAEEAIYTVDKYLDEAYLGGLGEVTIVHGKGTGVLRKTIMDMLKGHPHVKRYRLGEYGEGGTGVTVVEIK.

Residue glycine 332–threonine 339 coordinates ATP. A Smr domain is found at valine 713–lysine 788.

Belongs to the DNA mismatch repair MutS family. MutS2 subfamily. Homodimer. Binds to stalled ribosomes, contacting rRNA.

Endonuclease that is involved in the suppression of homologous recombination and thus may have a key role in the control of bacterial genetic diversity. In terms of biological role, acts as a ribosome collision sensor, splitting the ribosome into its 2 subunits. Detects stalled/collided 70S ribosomes which it binds and splits by an ATP-hydrolysis driven conformational change. Acts upstream of the ribosome quality control system (RQC), a ribosome-associated complex that mediates the extraction of incompletely synthesized nascent chains from stalled ribosomes and their subsequent degradation. Probably generates substrates for RQC. This chain is Endonuclease MutS2, found in Clostridium botulinum (strain 657 / Type Ba4).